A 577-amino-acid chain; its full sequence is Probable HECT-type ubiquitin ligase-interacting protein creD (577 aa).

Disordered stretches follow at residues leucine 376–serine 398 and asparagine 428–arginine 566. Composition is skewed to polar residues over residues asparagine 428 to glutamate 447 and serine 460 to glutamate 472. A compositionally biased stretch (basic and acidic residues) spans leucine 473–valine 486. Residues serine 528–phenylalanine 544 are compositionally biased toward polar residues.

This sequence belongs to the arrestin family. As to quaternary structure, interacts with hulA.

Component of the regulatory network controlling carbon source utilization through ubiquitination and deubiquitination involving creA, creB, creC, creD and acrB. May be involved in signaling by recognizing appropriately phosphorylated substrates via its arrestin domains and then recruit a HECT-type ubiquitin ligase such as hulA, leading to ubiquitination of the substrate, providing a link between ubiquitination and phosphorylation in protein regulation and stability. This chain is Probable HECT-type ubiquitin ligase-interacting protein creD (creD), found in Aspergillus terreus (strain NIH 2624 / FGSC A1156).